The primary structure comprises 194 residues: Imidazoleglycerol-phosphate dehydratase (194 aa).

This sequence belongs to the imidazoleglycerol-phosphate dehydratase family.

Its subcellular location is the cytoplasm. It carries out the reaction D-erythro-1-(imidazol-4-yl)glycerol 3-phosphate = 3-(imidazol-4-yl)-2-oxopropyl phosphate + H2O. The protein operates within amino-acid biosynthesis; L-histidine biosynthesis; L-histidine from 5-phospho-alpha-D-ribose 1-diphosphate: step 6/9. The protein is Imidazoleglycerol-phosphate dehydratase of Bacillus cereus (strain ZK / E33L).